A 308-amino-acid polypeptide reads, in one-letter code: MRLVFAGTPEPALPSLQRLIASPRHEVVAVLTRPDAAAGRRGRPTPSPVARLALDHDIPVLRPPKPNSEEFVAELRELAPDCCAVVAYGALLSERLLAVPPHGWINLHFSLLPAWRGAAPVQAAIAAGDAVTGATTFLIEPALDSGPVYGVVTETIRANDTAGELLTRLAESGAHLLESTLDGIADGRLQAVPQPADGVTVAPKITVDEARVRWDLPAHVVDRRIRAVTPNPGAWTVIGDARVKLGPVAPESAEPLAPGAIRVLKNAVHVGTATEPVRLGTVQPPGKKPMNAADWARGARLDASVSAQ.

Residue 110–113 (SLLP) participates in (6S)-5,6,7,8-tetrahydrofolate binding.

Belongs to the Fmt family.

It catalyses the reaction L-methionyl-tRNA(fMet) + (6R)-10-formyltetrahydrofolate = N-formyl-L-methionyl-tRNA(fMet) + (6S)-5,6,7,8-tetrahydrofolate + H(+). Its function is as follows. Attaches a formyl group to the free amino group of methionyl-tRNA(fMet). The formyl group appears to play a dual role in the initiator identity of N-formylmethionyl-tRNA by promoting its recognition by IF2 and preventing the misappropriation of this tRNA by the elongation apparatus. The sequence is that of Methionyl-tRNA formyltransferase from Mycobacterium sp. (strain KMS).